We begin with the raw amino-acid sequence, 316 residues long: Fe-S cluster assembly protein DRE2 (316 aa).

The N-terminal SAM-like domain stretch occupies residues Ser-4–Val-156. Residues Pro-157–Lys-202 form a linker region. 4 residues coordinate [2Fe-2S] cluster: Cys-209, Cys-223, Cys-226, and Cys-228. Residues Cys-209 to Cys-228 form a fe-S binding site A region. 4 residues coordinate [4Fe-4S] cluster: Cys-279, Cys-282, Cys-290, and Cys-293. 2 short sequence motifs (cx2C motif) span residues Cys-279–Cys-282 and Cys-290–Cys-293. The segment at Cys-279 to Cys-293 is fe-S binding site B.

Belongs to the anamorsin family. Monomer. Interacts with TAH18. Interacts with MIA40. It depends on [2Fe-2S] cluster as a cofactor. [4Fe-4S] cluster serves as cofactor.

It localises to the cytoplasm. The protein resides in the mitochondrion intermembrane space. Component of the cytosolic iron-sulfur (Fe-S) protein assembly (CIA) machinery required for the maturation of extramitochondrial Fe-S proteins. Part of an electron transfer chain functioning in an early step of cytosolic Fe-S biogenesis, facilitating the de novo assembly of a [4Fe-4S] cluster on the scaffold complex CFD1-NBP35. Electrons are transferred to DRE2 from NADPH via the FAD- and FMN-containing protein TAH18. TAH18-DRE2 are also required for the assembly of the diferric tyrosyl radical cofactor of ribonucleotide reductase (RNR), probably by providing electrons for reduction during radical cofactor maturation in the catalytic small subunit RNR2. The chain is Fe-S cluster assembly protein DRE2 from Laccaria bicolor (strain S238N-H82 / ATCC MYA-4686) (Bicoloured deceiver).